The following is a 196-amino-acid chain: Large ribosomal subunit protein uL18 (196 aa).

This sequence belongs to the universal ribosomal protein uL18 family. Part of the 50S ribosomal subunit. Contacts the 5S and 23S rRNAs.

Its function is as follows. This is one of the proteins that bind and probably mediate the attachment of the 5S RNA into the large ribosomal subunit, where it forms part of the central protuberance. This is Large ribosomal subunit protein uL18 from Saccharolobus islandicus (strain Y.N.15.51 / Yellowstone #2) (Sulfolobus islandicus).